An 828-amino-acid polypeptide reads, in one-letter code: Periplasmic nitrate reductase 1 (828 aa).

Residues 1-30 (MKMTRRAFVKANAAASAAAVAGITLPASAA) constitute a signal peptide (tat-type signal). The 4Fe-4S Mo/W bis-MGD-type domain maps to 41–97 (IKWDKAPCRFCGTGCSVLVGTQNGRVVATQGDPEAPVNKGLNCIKGYFLSKIMYGKD). [4Fe-4S] cluster contacts are provided by Cys-48, Cys-51, Cys-55, and Cys-83. Mo-bis(molybdopterin guanine dinucleotide) is bound by residues Lys-85, Gln-152, Asn-177, Cys-181, 214–221 (WGSNMAEM), 245–249 (STYYH), 264–266 (QTD), Met-374, Gln-378, Asn-484, 510–511 (SD), Lys-533, Asp-560, and 718–727 (TGRVLEHWHT). Phe-794 serves as a coordination point for substrate. 2 residues coordinate Mo-bis(molybdopterin guanine dinucleotide): Asn-802 and Lys-819.

It belongs to the prokaryotic molybdopterin-containing oxidoreductase family. NasA/NapA/NarB subfamily. In terms of assembly, component of the periplasmic nitrate reductase NapAB complex composed of NapA and NapB. The cofactor is [4Fe-4S] cluster. Mo-bis(molybdopterin guanine dinucleotide) is required as a cofactor. Predicted to be exported by the Tat system. The position of the signal peptide cleavage has not been experimentally proven.

Its subcellular location is the periplasm. The enzyme catalyses 2 Fe(II)-[cytochrome] + nitrate + 2 H(+) = 2 Fe(III)-[cytochrome] + nitrite + H2O. Catalytic subunit of the periplasmic nitrate reductase complex NapAB. Receives electrons from NapB and catalyzes the reduction of nitrate to nitrite. The chain is Periplasmic nitrate reductase 1 from Photobacterium profundum (strain SS9).